The chain runs to 550 residues: Arginine--tRNA ligase (550 aa).

The 'HIGH' region signature appears at 130–140; that stretch reads ANPTGPIHLGG.

It belongs to the class-I aminoacyl-tRNA synthetase family. In terms of assembly, monomer.

The protein resides in the cytoplasm. It carries out the reaction tRNA(Arg) + L-arginine + ATP = L-arginyl-tRNA(Arg) + AMP + diphosphate. In Corynebacterium glutamicum (strain ATCC 13032 / DSM 20300 / JCM 1318 / BCRC 11384 / CCUG 27702 / LMG 3730 / NBRC 12168 / NCIMB 10025 / NRRL B-2784 / 534), this protein is Arginine--tRNA ligase (argS).